The primary structure comprises 592 residues: NADH-quinone oxidoreductase subunit C/D (592 aa).

The tract at residues 1-183 is NADH dehydrogenase I subunit C; sequence MLTEFNSIPA…GPYILTEEKE (183 aa). Residues 207-592 form an NADH dehydrogenase I subunit D region; sequence DFMFLNLGPN…IDFVMADVDR (386 aa).

It in the N-terminal section; belongs to the complex I 30 kDa subunit family. The protein in the C-terminal section; belongs to the complex I 49 kDa subunit family. As to quaternary structure, NDH-1 is composed of 13 different subunits. Subunits NuoB, CD, E, F, and G constitute the peripheral sector of the complex.

Its subcellular location is the cell inner membrane. It carries out the reaction a quinone + NADH + 5 H(+)(in) = a quinol + NAD(+) + 4 H(+)(out). NDH-1 shuttles electrons from NADH, via FMN and iron-sulfur (Fe-S) centers, to quinones in the respiratory chain. The immediate electron acceptor for the enzyme in this species is believed to be ubiquinone. Couples the redox reaction to proton translocation (for every two electrons transferred, four hydrogen ions are translocated across the cytoplasmic membrane), and thus conserves the redox energy in a proton gradient. This chain is NADH-quinone oxidoreductase subunit C/D, found in Acidiphilium cryptum (strain JF-5).